A 560-amino-acid chain; its full sequence is SET domain-containing protein 4 (560 aa).

Disordered regions lie at residues 1 to 61 (MTSP…PSPQ) and 125 to 157 (KKQN…AEDN). The segment covering 26–38 (SRSSSYSSNSSMS) has biased composition (low complexity). Residues 47–59 (LSVSSAASETLPS) are compositionally biased toward polar residues. Over residues 141 to 157 (ESSKENKITPSMRAEDN) the composition is skewed to basic and acidic residues. The PHD-type zinc finger occupies 160–210 (KNGCICGSSDSKDELFIQCNKCKTWQHKLCYAFKKSDPIKRDFVCKRCDSD). The SET domain maps to 346–475 (ADIEVRKSSN…KGEEISVEWQ (130 aa)).

Belongs to the SET3 family.

Functionally, putative chromatin regulator. This chain is SET domain-containing protein 4 (SET4), found in Saccharomyces cerevisiae (strain ATCC 204508 / S288c) (Baker's yeast).